We begin with the raw amino-acid sequence, 142 residues long: Large ribosomal subunit protein uL11 (142 aa).

It belongs to the universal ribosomal protein uL11 family. As to quaternary structure, part of the ribosomal stalk of the 50S ribosomal subunit. Interacts with L10 and the large rRNA to form the base of the stalk. L10 forms an elongated spine to which L12 dimers bind in a sequential fashion forming a multimeric L10(L12)X complex. In terms of processing, one or more lysine residues are methylated.

In terms of biological role, forms part of the ribosomal stalk which helps the ribosome interact with GTP-bound translation factors. The polypeptide is Large ribosomal subunit protein uL11 (Bartonella quintana (strain Toulouse) (Rochalimaea quintana)).